A 256-amino-acid polypeptide reads, in one-letter code: Imidazole glycerol phosphate synthase subunit HisF (256 aa).

Catalysis depends on residues aspartate 12 and aspartate 131.

It belongs to the HisA/HisF family. As to quaternary structure, heterodimer of HisH and HisF.

The protein resides in the cytoplasm. The catalysed reaction is 5-[(5-phospho-1-deoxy-D-ribulos-1-ylimino)methylamino]-1-(5-phospho-beta-D-ribosyl)imidazole-4-carboxamide + L-glutamine = D-erythro-1-(imidazol-4-yl)glycerol 3-phosphate + 5-amino-1-(5-phospho-beta-D-ribosyl)imidazole-4-carboxamide + L-glutamate + H(+). It participates in amino-acid biosynthesis; L-histidine biosynthesis; L-histidine from 5-phospho-alpha-D-ribose 1-diphosphate: step 5/9. Functionally, IGPS catalyzes the conversion of PRFAR and glutamine to IGP, AICAR and glutamate. The HisF subunit catalyzes the cyclization activity that produces IGP and AICAR from PRFAR using the ammonia provided by the HisH subunit. This is Imidazole glycerol phosphate synthase subunit HisF from Beutenbergia cavernae (strain ATCC BAA-8 / DSM 12333 / CCUG 43141 / JCM 11478 / NBRC 16432 / NCIMB 13614 / HKI 0122).